We begin with the raw amino-acid sequence, 761 residues long: Prolyl oligopeptidase A (761 aa).

Residues serine 606, aspartate 690, and histidine 726 each act as charge relay system in the active site.

It belongs to the peptidase S9A family. In terms of assembly, monomer.

It carries out the reaction Hydrolysis of Pro-|-Xaa &gt;&gt; Ala-|-Xaa in oligopeptides.. Housekeeping prolyl oligopeptidase (POP) that behaves like a conventional POP by cleaving peptide bonds on the C-terminal side of prolyl residues within peptides that are up to approximately 30 amino acids long. In Amanita bisporigera (Destroying angel), this protein is Prolyl oligopeptidase A.